The chain runs to 923 residues: Protein translocase subunit SecA (923 aa).

Residues Q86, 104–108 (GEGKT), and D512 each bind ATP. C906, C908, C917, and H918 together coordinate Zn(2+).

This sequence belongs to the SecA family. Monomer and homodimer. Part of the essential Sec protein translocation apparatus which comprises SecA, SecYEG and auxiliary proteins SecDF-YajC and YidC. The cofactor is Zn(2+).

It localises to the cell inner membrane. The protein localises to the cytoplasm. The enzyme catalyses ATP + H2O + cellular proteinSide 1 = ADP + phosphate + cellular proteinSide 2.. Part of the Sec protein translocase complex. Interacts with the SecYEG preprotein conducting channel. Has a central role in coupling the hydrolysis of ATP to the transfer of proteins into and across the cell membrane, serving both as a receptor for the preprotein-SecB complex and as an ATP-driven molecular motor driving the stepwise translocation of polypeptide chains across the membrane. In Caulobacter vibrioides (strain ATCC 19089 / CIP 103742 / CB 15) (Caulobacter crescentus), this protein is Protein translocase subunit SecA.